The following is a 138-amino-acid chain: Putative pre-16S rRNA nuclease (138 aa).

The protein belongs to the YqgF nuclease family.

It is found in the cytoplasm. Functionally, could be a nuclease involved in processing of the 5'-end of pre-16S rRNA. The protein is Putative pre-16S rRNA nuclease of Klebsiella pneumoniae (strain 342).